A 284-amino-acid chain; its full sequence is uncharacterized protein (284 aa).

The first 23 residues, 1–23 (MKRGCAIAVMICGLITSVSAASA), serve as a signal peptide directing secretion.

This sequence belongs to the surface antigen msp4 family.

This is an uncharacterized protein from Brucella abortus (strain 2308).